Reading from the N-terminus, the 389-residue chain is Transcription factor TGAL10 (389 aa).

The segment at 80 to 110 is disordered; sequence DDQDNAAALQESPRHASDSFEQEASKPRDKI. A compositionally biased stretch (basic and acidic residues) spans 91 to 110; that stretch reads SPRHASDSFEQEASKPRDKI. One can recognise a bZIP domain in the interval 107 to 151; sequence RDKIQRRLAQNREAARKSRLRKKAYIQNLETSRMKLAHLEQEITR. Positions 109 to 129 are basic motif; the sequence is KIQRRLAQNREAARKSRLRKK. Residues 135–149 are leucine-zipper; the sequence is LETSRMKLAHLEQEI. Positions 176 to 389 constitute a DOG1 domain; it reads VVTFEVEYAQ…LHVRRRAELG (214 aa). Disordered stretches follow at residues 320–345 and 370–389; these read TSCD…GDGG and HRRS…AELG. Residues 380–389 show a composition bias toward basic residues; sequence LHVRRRAELG.

It belongs to the bZIP family.

The protein localises to the nucleus. In terms of biological role, transcriptional regulator involved in defense response. This is Transcription factor TGAL10 from Oryza sativa subsp. japonica (Rice).